Here is a 291-residue protein sequence, read N- to C-terminus: Ubiquinone biosynthesis protein COQ4, mitochondrial (291 aa).

A mitochondrion-targeting transit peptide spans 1-37 (MLGRRSVSLLRGLTELPVSSRAHTALRALSVPQTRRN). 4 residues coordinate Zn(2+): histidine 169, aspartate 170, histidine 173, and glutamate 185. Basic and acidic residues predominate over residues 271-283 (PLNEAKEAAERRS). The interval 271 to 291 (PLNEAKEAAERRSKTTQNQIY) is disordered.

Belongs to the COQ4 family. In terms of assembly, component of a multi-subunit COQ enzyme complex, composed of at least COQ3, COQ4, COQ5, COQ6, COQ7 and COQ9. Zn(2+) serves as cofactor.

Its subcellular location is the mitochondrion inner membrane. The catalysed reaction is a 4-hydroxy-3-methoxy-5-(all-trans-polyprenyl)benzoate + H(+) = a 2-methoxy-6-(all-trans-polyprenyl)phenol + CO2. Its pathway is cofactor biosynthesis; ubiquinone biosynthesis. Functionally, lyase that catalyzes the C1-decarboxylation of 4-hydroxy-3-methoxy-5-(all-trans-polyprenyl)benzoic acid into 2-methoxy-6-(all-trans-polyprenyl)phenol during ubiquinone biosynthesis. The sequence is that of Ubiquinone biosynthesis protein COQ4, mitochondrial from Coprinopsis cinerea (strain Okayama-7 / 130 / ATCC MYA-4618 / FGSC 9003) (Inky cap fungus).